The following is an 810-amino-acid chain: F-BAR domain only protein 2 (810 aa).

Residues 3 to 250 form the F-BAR domain; it reads MAYFVENFWG…NMANTTVESL (248 aa). Residues 3–274 form a mediates dimerization and binding to membranes enriched in Pi(4,5)-P2 and induces their tubulation region; it reads MAYFVENFWG…PGLIEFEECD (272 aa). Residues 87–156 are a coiled coil; it reads HLDLVRKLQE…CVEQERLKKE (70 aa). A Glycyl lysine isopeptide (Lys-Gly) (interchain with G-Cter in SUMO2) cross-link involves residue lysine 297. The segment at 301 to 352 is disordered; sequence DAESVECPDADSLNIPDVDEEGYSIKPETNQNDTKENHFYSSSDSDSEDEEP. Position 312 is a phosphoserine (serine 312). Threonine 385 carries the post-translational modification Phosphothreonine. Phosphoserine is present on residues serine 387, serine 394, and serine 403. Residues 403-537 are disordered; that stretch reads SNEELTKSKP…VSRGPSPVSL (135 aa). The segment covering 433–456 has biased composition (low complexity); it reads PSLDSSSSSSLTSSSSARPTTPLS. Phosphoserine is present on residues serine 488, serine 493, serine 496, serine 508, serine 510, serine 511, and serine 533. Low complexity predominate over residues 502 to 521; that stretch reads PLARAESSSSISSSASLSAA. Positions 521 to 810 are mediates interaction with DAB2, EPS15, EPS15R and ITSN1; sequence ANTPTVGVSR…FATGRYLADC (290 aa). Positions 542-809 constitute an MHD domain; it reads TLPVAVALTE…RFATGRYLAD (268 aa).

Belongs to the FCHO family. Homodimer; disulfide-linked. May form homotetramer. Interacts with AP2A1. Interacts with EPS15, EPS15R, ITSN1 and ITSN2; recruit those scaffolding proteins which in turn may interact with the adaptor protein complex AP-2 at the plasma membrane. Interacts with DAB2 (via DPF motifs); mediates LDL receptor/LDLR endocytosis. In terms of processing, ubiquitinated. Mainly undergoes monoubiquitination but also polyubiquitination.

It localises to the membrane. The protein localises to the clathrin-coated pit. Its function is as follows. Functions in an early step of clathrin-mediated endocytosis. Has both a membrane binding/bending activity and the ability to recruit proteins essential to the formation of functional clathrin-coated pits. Has a lipid-binding activity with a preference for membranes enriched in phosphatidylserine and phosphoinositides (Pi(4,5) biphosphate) like the plasma membrane. Its membrane-bending activity might be important for the subsequent action of clathrin and adaptors in the formation of clathrin-coated vesicles. Involved in adaptor protein complex AP-2-dependent endocytosis of the transferrin receptor, it also functions in the AP-2-independent endocytosis of the LDL receptor. The protein is F-BAR domain only protein 2 (FCHO2) of Pongo abelii (Sumatran orangutan).